Reading from the N-terminus, the 72-residue chain is Translation initiation factor IF-1 (72 aa).

In terms of domain architecture, S1-like spans 1 to 72; it reads MSKEDVIELE…TRGRIVWRSK (72 aa).

It belongs to the IF-1 family. As to quaternary structure, component of the 30S ribosomal translation pre-initiation complex which assembles on the 30S ribosome in the order IF-2 and IF-3, IF-1 and N-formylmethionyl-tRNA(fMet); mRNA recruitment can occur at any time during PIC assembly.

It localises to the cytoplasm. One of the essential components for the initiation of protein synthesis. Stabilizes the binding of IF-2 and IF-3 on the 30S subunit to which N-formylmethionyl-tRNA(fMet) subsequently binds. Helps modulate mRNA selection, yielding the 30S pre-initiation complex (PIC). Upon addition of the 50S ribosomal subunit IF-1, IF-2 and IF-3 are released leaving the mature 70S translation initiation complex. In Caldicellulosiruptor saccharolyticus (strain ATCC 43494 / DSM 8903 / Tp8T 6331), this protein is Translation initiation factor IF-1.